The primary structure comprises 237 residues: Uridylate kinase (237 aa).

An ATP-binding site is contributed by 9–12 (KLSG). Residue G51 participates in UMP binding. G52 and R56 together coordinate ATP. Residues D71 and 132–139 (CGNPFFTT) contribute to the UMP site. Residues T159, Y165, and D168 each coordinate ATP.

Belongs to the UMP kinase family. As to quaternary structure, homohexamer.

The protein resides in the cytoplasm. The enzyme catalyses UMP + ATP = UDP + ADP. It participates in pyrimidine metabolism; CTP biosynthesis via de novo pathway; UDP from UMP (UMPK route): step 1/1. With respect to regulation, inhibited by UTP. In terms of biological role, catalyzes the reversible phosphorylation of UMP to UDP. This chain is Uridylate kinase, found in Prochlorococcus marinus (strain MIT 9303).